Consider the following 238-residue polypeptide: Sugar fermentation stimulation protein homolog (238 aa).

It belongs to the SfsA family.

This Shewanella denitrificans (strain OS217 / ATCC BAA-1090 / DSM 15013) protein is Sugar fermentation stimulation protein homolog.